The following is a 241-amino-acid chain: Probable transcriptional regulatory protein Neut_0281 (241 aa).

This sequence belongs to the TACO1 family.

It is found in the cytoplasm. This chain is Probable transcriptional regulatory protein Neut_0281, found in Nitrosomonas eutropha (strain DSM 101675 / C91 / Nm57).